The primary structure comprises 402 residues: B3 domain-containing protein Os01g0723500 (402 aa).

The TF-B3 1 DNA-binding region spans arginine 18 to threonine 121. The segment at glutamate 126–leucine 203 is disordered. Residues aspartate 152–glycine 162 are compositionally biased toward basic and acidic residues. The span at serine 173–threonine 186 shows a compositional bias: polar residues. Residues cysteine 289 to valine 381 constitute a DNA-binding region (TF-B3 2).

Its subcellular location is the nucleus. This chain is B3 domain-containing protein Os01g0723500, found in Oryza sativa subsp. japonica (Rice).